The chain runs to 765 residues: Dipeptidyl peptidase 4 (765 aa).

Over 1 to 6 (MKTPWK) the chain is Cytoplasmic. The helical; Signal-anchor for type II membrane protein transmembrane segment at 7–29 (VLLGLLGLAALITIITVPVVLLN) threads the bilayer. At 30-765 (KGNDAAADSR…HFIKQCFSLP (736 aa)) the chain is on the extracellular side. N-linked (GlcNAc...) asparagine glycans are attached at residues Asn84, Asn91, Asn149, Asn178, Asn228, Asn280, Asn320, Asn330, and Asn331. 3 disulfide bridges follow: Cys384/Cys393, Cys443/Cys446, and Cys453/Cys471. N-linked (GlcNAc...) asparagine glycosylation is present at Asn519. Catalysis depends on Ser629, which acts as the Charge relay system. Cysteines 648 and 761 form a disulfide. An N-linked (GlcNAc...) asparagine glycan is attached at Asn684. Catalysis depends on charge relay system residues Asp707 and His739.

This sequence belongs to the peptidase S9B family. DPPIV subfamily. Monomer. Homodimer. Heterodimer with Seprase (FAP). Requires homodimerization for optimal dipeptidyl peptidase activity and T-cell costimulation. Found in a membrane raft complex, at least composed of BCL10, CARD11, DPP4 and IKBKB. Associates with collagen. Interacts with PTPRC; the interaction is enhanced in an interleukin-12-dependent manner in activated lymphocytes. Interacts (extracellular domain) with ADA; does not inhibit its dipeptidyl peptidase activity. Interacts with CAV1 (via the N-terminus); the interaction is direct. Interacts (via cytoplasmic tail) with CARD11 (via PDZ domain); its homodimerization is necessary for interaction with CARD11. Interacts with IGF2R; the interaction is direct. Interacts with GPC3. The soluble form (Dipeptidyl peptidase 4 soluble form also named SDPP) derives from the membrane form (Dipeptidyl peptidase 4 membrane form also named MDPP) by proteolytic processing. In terms of processing, N- and O-Glycosylated. Post-translationally, phosphorylated. Mannose 6-phosphate residues in the carbohydrate moiety are necessary for interaction with IGF2R in activated T-cells. Mannose 6-phosphorylation is induced during T-cell activation.

Its subcellular location is the secreted. It is found in the cell membrane. It localises to the apical cell membrane. The protein localises to the cell projection. The protein resides in the invadopodium membrane. Its subcellular location is the lamellipodium membrane. It is found in the cell junction. It localises to the membrane raft. It carries out the reaction Release of an N-terminal dipeptide, Xaa-Yaa-|-Zaa-, from a polypeptide, preferentially when Yaa is Pro, provided Zaa is neither Pro nor hydroxyproline.. Inhibited by GPC3 and diprotin A. In terms of biological role, cell surface glycoprotein receptor involved in the costimulatory signal essential for T-cell receptor (TCR)-mediated T-cell activation. Acts as a positive regulator of T-cell coactivation, by binding at least ADA, CAV1, IGF2R, and PTPRC. Its binding to CAV1 and CARD11 induces T-cell proliferation and NF-kappa-B activation in a T-cell receptor/CD3-dependent manner. Its interaction with ADA also regulates lymphocyte-epithelial cell adhesion. In association with FAP is involved in the pericellular proteolysis of the extracellular matrix (ECM), the migration and invasion of endothelial cells into the ECM. May be involved in the promotion of lymphatic endothelial cells adhesion, migration and tube formation. When overexpressed, enhanced cell proliferation, a process inhibited by GPC3. Also acts as a serine exopeptidase with a dipeptidyl peptidase activity that regulates various physiological processes by cleaving peptides in the circulation, including many chemokines, mitogenic growth factors, neuropeptides and peptide hormones. Removes N-terminal dipeptides sequentially from polypeptides having unsubstituted N-termini provided that the penultimate residue is proline. The sequence is that of Dipeptidyl peptidase 4 (DPP4) from Felis catus (Cat).